The primary structure comprises 248 residues: Triosephosphate isomerase (248 aa).

A substrate-binding site is contributed by 9–11 (NWK). Catalysis depends on histidine 94, which acts as the Electrophile. The active-site Proton acceptor is the glutamate 166. Substrate contacts are provided by residues glycine 172, serine 212, and 233–234 (GG).

Belongs to the triosephosphate isomerase family. Homodimer.

Its subcellular location is the cytoplasm. The enzyme catalyses D-glyceraldehyde 3-phosphate = dihydroxyacetone phosphate. It functions in the pathway carbohydrate biosynthesis; gluconeogenesis. Its pathway is carbohydrate degradation; glycolysis; D-glyceraldehyde 3-phosphate from glycerone phosphate: step 1/1. Its function is as follows. Involved in the gluconeogenesis. Catalyzes stereospecifically the conversion of dihydroxyacetone phosphate (DHAP) to D-glyceraldehyde-3-phosphate (G3P). This chain is Triosephosphate isomerase, found in Clostridium acetobutylicum (strain ATCC 824 / DSM 792 / JCM 1419 / IAM 19013 / LMG 5710 / NBRC 13948 / NRRL B-527 / VKM B-1787 / 2291 / W).